The following is a 1153-amino-acid chain: Nitric oxide synthase, inducible (1153 aa).

Positions 23-27 (DINNN) match the DINNN-motif; mediates interaction with SPSB1, SPSB2 and SPSB4 motif. Zn(2+) is bound by residues Cys110 and Cys115. Ser118 serves as a coordination point for (6R)-L-erythro-5,6,7,8-tetrahydrobiopterin. Cys200 serves as a coordination point for heme b. Residue Ser234 is modified to Phosphoserine; by PKA. Positions 263, 372, 373, and 377 each coordinate L-arginine. Arg381, Ile462, Trp463, and Phe476 together coordinate (6R)-L-erythro-5,6,7,8-tetrahydrobiopterin. Tyr491 contacts heme b. Positions 515-535 (LKVLVKAVLFACMLMRKTMAS) are calmodulin-binding. The Flavodoxin-like domain maps to 539-677 (VTILFATETG…AFRSWAVQTF (139 aa)). Thr545, Glu546, Thr547, Lys549, and Ser550 together coordinate FMN. The residue at position 575 (Tyr575) is a Phosphotyrosine. A Phosphoserine; by PKA modification is found at Ser578. FMN-binding residues include Ser591, Thr592, Ser628, Arg633, Cys635, Glu661, and Gln665. Residues 730-970 (KNVFTMRLKS…VRNASGFHLP (241 aa)) enclose the FAD-binding FR-type domain. Residue Arg750 coordinates NADP(+). Position 772 (His772) interacts with FAD. Ser892 is subject to Phosphoserine; by PKA. Positions 906, 908, 909, 924, and 926 each coordinate FAD. Thr929 is a binding site for NADP(+). The FAD site is built by Tyr930, Val943, Cys944, and Ser945. NADP(+)-binding residues include Thr984, Arg1017, Ser1046, Arg1047, Lys1053, Tyr1055, Gln1057, and Asp1090.

Belongs to the NOS family. Homodimer. Interacts with NHERF1. Interacts with GAPDH; induced by oxidatively-modified low-densitity lipoprotein (LDL(ox)). Interacts with S100A8 and S100A9 to form the iNOS-S100A8/9 transnitrosylase complex. Interacts with SPSB1, SPSB2 and SPSB4. Interacts with ELOC and CUL5 in the presence of SPSB1 or SPSB2 or SPSB4. Forms a complex with ASL, ASS1 and HSP90AA1; the complex regulates cell-autonomous L-arginine synthesis and citrulline recycling while channeling extracellular L-arginine to nitric oxide synthesis pathway. The cofactor is heme b. FAD is required as a cofactor. FMN serves as cofactor. It depends on (6R)-L-erythro-5,6,7,8-tetrahydrobiopterin as a cofactor. In terms of processing, polyubiquitinated; mediated by SPSB1, SPSB2 and SPSB4, leading to proteasomal degradation. In terms of tissue distribution, expressed in the liver, retina, bone cells and airway epithelial cells of the lung. Not expressed in the platelets. Expressed in chondrocytes.

The protein localises to the cytoplasm. It is found in the cytosol. The catalysed reaction is 2 L-arginine + 3 NADPH + 4 O2 + H(+) = 2 L-citrulline + 2 nitric oxide + 3 NADP(+) + 4 H2O. With respect to regulation, regulated by calcium/calmodulin. Aspirin inhibits expression and function of this enzyme and effects may be exerted at the level of translational/post-translational modification and directly on the catalytic activity. Its function is as follows. Produces nitric oxide (NO) which is a messenger molecule with diverse functions throughout the body. In macrophages, NO mediates tumoricidal and bactericidal actions. Also has nitrosylase activity and mediates cysteine S-nitrosylation of cytoplasmic target proteins such PTGS2/COX2. As component of the iNOS-S100A8/9 transnitrosylase complex involved in the selective inflammatory stimulus-dependent S-nitrosylation of GAPDH on 'Cys-247' implicated in regulation of the GAIT complex activity and probably multiple targets including ANXA5, EZR, MSN and VIM. Involved in inflammation, enhances the synthesis of pro-inflammatory mediators such as IL6 and IL8. The chain is Nitric oxide synthase, inducible from Homo sapiens (Human).